A 368-amino-acid polypeptide reads, in one-letter code: Glutamate 5-kinase (368 aa).

Lysine 11 provides a ligand contact to ATP. Substrate contacts are provided by serine 51, aspartate 138, and asparagine 150. ATP-binding positions include 170–171 (TD) and 212–218 (TGGMATK). In terms of domain architecture, PUA spans 276–354 (AGEIIVDHGA…QQISQILGYE (79 aa)).

The protein belongs to the glutamate 5-kinase family.

Its subcellular location is the cytoplasm. It carries out the reaction L-glutamate + ATP = L-glutamyl 5-phosphate + ADP. It participates in amino-acid biosynthesis; L-proline biosynthesis; L-glutamate 5-semialdehyde from L-glutamate: step 1/2. Functionally, catalyzes the transfer of a phosphate group to glutamate to form L-glutamate 5-phosphate. This chain is Glutamate 5-kinase, found in Photorhabdus laumondii subsp. laumondii (strain DSM 15139 / CIP 105565 / TT01) (Photorhabdus luminescens subsp. laumondii).